The primary structure comprises 126 residues: UPF0102 protein plu4003 (126 aa).

The protein belongs to the UPF0102 family.

The protein is UPF0102 protein plu4003 of Photorhabdus laumondii subsp. laumondii (strain DSM 15139 / CIP 105565 / TT01) (Photorhabdus luminescens subsp. laumondii).